The following is a 389-amino-acid chain: 26S proteasome regulatory subunit 6B homolog (389 aa).

An ATP-binding site is contributed by 175 to 182 (GPPGTGKT).

The protein belongs to the AAA ATPase family.

Its subcellular location is the cytoplasm. It is found in the nucleus. In terms of biological role, the 26S proteasome is involved in the ATP-dependent degradation of ubiquitinated proteins. The regulatory (or ATPase) complex confers ATP dependency and substrate specificity to the 26S complex. The protein is 26S proteasome regulatory subunit 6B homolog (rpt3) of Schizosaccharomyces pombe (strain 972 / ATCC 24843) (Fission yeast).